A 519-amino-acid polypeptide reads, in one-letter code: Protein nucleotidyltransferase YdiU (519 aa).

Positions 101, 103, 104, 123, 135, 136, 193, and 200 each coordinate ATP. Aspartate 271 serves as the catalytic Proton acceptor. Mg(2+) is bound by residues asparagine 272 and aspartate 281. Aspartate 281 is an ATP binding site.

This sequence belongs to the SELO family. Mg(2+) is required as a cofactor. The cofactor is Mn(2+).

It catalyses the reaction L-seryl-[protein] + ATP = 3-O-(5'-adenylyl)-L-seryl-[protein] + diphosphate. The catalysed reaction is L-threonyl-[protein] + ATP = 3-O-(5'-adenylyl)-L-threonyl-[protein] + diphosphate. The enzyme catalyses L-tyrosyl-[protein] + ATP = O-(5'-adenylyl)-L-tyrosyl-[protein] + diphosphate. It carries out the reaction L-histidyl-[protein] + UTP = N(tele)-(5'-uridylyl)-L-histidyl-[protein] + diphosphate. It catalyses the reaction L-seryl-[protein] + UTP = O-(5'-uridylyl)-L-seryl-[protein] + diphosphate. The catalysed reaction is L-tyrosyl-[protein] + UTP = O-(5'-uridylyl)-L-tyrosyl-[protein] + diphosphate. In terms of biological role, nucleotidyltransferase involved in the post-translational modification of proteins. It can catalyze the addition of adenosine monophosphate (AMP) or uridine monophosphate (UMP) to a protein, resulting in modifications known as AMPylation and UMPylation. The protein is Protein nucleotidyltransferase YdiU of Tolumonas auensis (strain DSM 9187 / NBRC 110442 / TA 4).